The sequence spans 376 residues: MRIYDPFRKKWIEEEIETPFPSKGLVATFPFVDLHVHVRLNGGEDYSSLEEASLVGGFFKVVVQPNTKPLIDSKEVLERHLDLSKNRAVEFLFAVSPFGSIEAEGERVVGFSTDGIEYDYPTLVETMKKKKKALWFDHSQMYEVDGIFYEGAPLPFQKRPRSNEAIAIARTVLTGLEYGFERFHIQHVTTKYSVEVISFLKNLAKVSCEVTPHHLFFCYEDIKNTNFKINPPLGSPEDRRALIEAVKKDVIDVLATDHAPHHEKPDDFLTAPYGSTSIEIAFPAYYTALGDLELVVKKLTKKPLEVLGVEARLTEDTLVFIDPEAEFIVDAKKFKSKGKNSMFDGVRLKGKVVALKLKGRWVMIDGEVIADQKEND.

The Zn(2+) site is built by His35 and His37. Substrate is bound by residues 37 to 39 (HVR) and Asn66. Asp114, His138, and His187 together coordinate Zn(2+). Asn230 is a substrate binding site. Asp257 lines the Zn(2+) pocket. Residue Asp257 is part of the active site. Substrate is bound by residues His261 and 273–274 (YG).

It belongs to the metallo-dependent hydrolases superfamily. DHOase family. Class I DHOase subfamily. It depends on Zn(2+) as a cofactor.

The enzyme catalyses (S)-dihydroorotate + H2O = N-carbamoyl-L-aspartate + H(+). Its pathway is pyrimidine metabolism; UMP biosynthesis via de novo pathway; (S)-dihydroorotate from bicarbonate: step 3/3. Its function is as follows. Catalyzes the reversible cyclization of carbamoyl aspartate to dihydroorotate. This is Putative dihydroorotase (pyrC) from Thermotoga maritima (strain ATCC 43589 / DSM 3109 / JCM 10099 / NBRC 100826 / MSB8).